We begin with the raw amino-acid sequence, 625 residues long: MSPSGSTKGESSGLNQHYEEKVRPCIDLVDSLRALGVEKDLNLPAIAVIGDQSSGKSSVLEALSGVALPRGTGIVTRCPLVLKLKKITKDKSWHGLLTYNDKIRELKDPAKIEKAVLNAQTALAGIGEGISHEMITLEIQSCDVPDLTLIDLPGIARVATGNQPEDIEKQIKSLIEKFIKRQETISLVVVPANIDIATTEALKMASTVDPTGQRTLGILTKPDLVDRGMEDTVVRTVNNEVIPLKKGYMIVKCRGQQDINDKLGLVEALEKERRFFDENVHFRSLLEDRKATIPLLAERLTKELVEHIAKNLPQLQNQLEMKLEKTSADLRGLGDGVPLDKNEKSNFLIMKIRQFNDVLERVQMAEEDVEKPNTRVFSKIRSEFVKWKRILDSKAIKTEETLRDEVQEYVKTRRGKELPGFVNYRTFENIVKKHIAELHEPALKLLKDVTDIVHSSVDHIVNAHFSSFSPLMRAAKDPTEDFLHEQFQRAEEKIHSQFRMEKIVYSQDDLYSDQLTTAKNTLRGYGLQSPNVSADVREMAYHLTSYLTIACERLANQIPLIVQYHMLNQYISQLQNAMLGLIGKNSPGMLLCEDSGVARKRKDLKERLERLKSAGRVLSKFVHSA.

Positions 40 to 313 (DLNLPAIAVI…LVEHIAKNLP (274 aa)) constitute a Dynamin-type G domain. Residues 50-57 (GDQSSGKS) form a G1 motif region. GTP is bound at residue 50 to 57 (GDQSSGKS). A G2 motif region spans residues 75-77 (VTR). Positions 151 to 154 (DLPG) are G3 motif. GTP is bound by residues 151–155 (DLPGI) and 220–223 (TKPD). The interval 220–223 (TKPD) is G4 motif. The segment at 252 to 255 (KCRG) is G5 motif. The GED domain maps to 536-625 (VREMAYHLTS…RVLSKFVHSA (90 aa)).

This sequence belongs to the TRAFAC class dynamin-like GTPase superfamily. Dynamin/Fzo/YdjA family.

The protein localises to the cytoplasm. The polypeptide is Interferon-induced GTP-binding protein MxE (mxe) (Danio rerio (Zebrafish)).